Consider the following 214-residue polypeptide: Protein-L-isoaspartate O-methyltransferase (214 aa).

The active site involves Ser63.

Belongs to the methyltransferase superfamily. L-isoaspartyl/D-aspartyl protein methyltransferase family.

Its subcellular location is the cytoplasm. The enzyme catalyses [protein]-L-isoaspartate + S-adenosyl-L-methionine = [protein]-L-isoaspartate alpha-methyl ester + S-adenosyl-L-homocysteine. In terms of biological role, catalyzes the methyl esterification of L-isoaspartyl residues in peptides and proteins that result from spontaneous decomposition of normal L-aspartyl and L-asparaginyl residues. It plays a role in the repair and/or degradation of damaged proteins. The polypeptide is Protein-L-isoaspartate O-methyltransferase (Maridesulfovibrio salexigens (strain ATCC 14822 / DSM 2638 / NCIMB 8403 / VKM B-1763) (Desulfovibrio salexigens)).